Reading from the N-terminus, the 412-residue chain is MAAALLARASGPARRALCPRAWRQLHTIYQSVELPETHQMLLQTCRDFAEKELFPIAAQVDKEHLFPAAQVKKMGGLGLLAMDVPEELGGAGLDYLAYAIAMEEISRGCASTGVIMSVNNSLYLGPILKFGSKEQKQAWVTPFTSGDKIGCFALSEPGNGSDAGAASTTARAEGDSWVLNGTKAWITNAWEASAAVVFASTDRALQNKGISAFLVPMPTPGLTLGKKEDKLGIRGSSTANLIFEDCRIPKDSILGEPGMGFKIAMQTLDMGRIGIASQALGIAQTALDCAVNYAENRMAFGAPLTKLQVIQFKLADMALALESARLLTWRAAMLKDNKKPFIKEAAMAKLAASEAATAISHQAIQILGGMGYVTEMPAERHYRDARITEIYEGTSEIQRLVIAGHLLRSYRS.

A mitochondrion-targeting transit peptide spans 1-24 (MAAALLARASGPARRALCPRAWRQ). Residue T27 is modified to Phosphothreonine. K51 carries the N6-acetyllysine; alternate modification. At K51 the chain carries N6-succinyllysine; alternate. An N6-acetyllysine modification is found at K72. K129 carries the post-translational modification N6-acetyllysine; alternate. N6-succinyllysine; alternate is present on K129. Residues 152–161 (FALSEPGNGS) and 185–187 (WIT) each bind FAD. S161 provides a ligand contact to substrate. N6-acetyllysine is present on K208. K262 carries the N6-acetyllysine; alternate modification. Position 262 is an N6-succinyllysine; alternate (K262). 269–272 (DMGR) contacts substrate. Position 297 (R297) interacts with FAD. K306 bears the N6-acetyllysine; alternate mark. K306 carries the post-translational modification N6-succinyllysine; alternate. Residues Q308 and 365–369 (QILGG) contribute to the FAD site. E392 serves as the catalytic Proton acceptor. G393 is a binding site for substrate. An FAD-binding site is contributed by 394-396 (TSE).

Belongs to the acyl-CoA dehydrogenase family. Homotetramer. It depends on FAD as a cofactor.

It is found in the mitochondrion matrix. It carries out the reaction a short-chain 2,3-saturated fatty acyl-CoA + oxidized [electron-transfer flavoprotein] + H(+) = a short-chain (2E)-enoyl-CoA + reduced [electron-transfer flavoprotein]. The enzyme catalyses butanoyl-CoA + oxidized [electron-transfer flavoprotein] + H(+) = (2E)-butenoyl-CoA + reduced [electron-transfer flavoprotein]. It catalyses the reaction pentanoyl-CoA + oxidized [electron-transfer flavoprotein] + H(+) = (2E)-pentenoyl-CoA + reduced [electron-transfer flavoprotein]. The catalysed reaction is hexanoyl-CoA + oxidized [electron-transfer flavoprotein] + H(+) = (2E)-hexenoyl-CoA + reduced [electron-transfer flavoprotein]. Its pathway is lipid metabolism; mitochondrial fatty acid beta-oxidation. Short-chain specific acyl-CoA dehydrogenase is one of the acyl-CoA dehydrogenases that catalyze the first step of mitochondrial fatty acid beta-oxidation, an aerobic process breaking down fatty acids into acetyl-CoA and allowing the production of energy from fats. The first step of fatty acid beta-oxidation consists in the removal of one hydrogen from C-2 and C-3 of the straight-chain fatty acyl-CoA thioester, resulting in the formation of trans-2-enoyl-CoA. Among the different mitochondrial acyl-CoA dehydrogenases, short-chain specific acyl-CoA dehydrogenase acts specifically on acyl-CoAs with saturated 4 to 6 carbons long primary chains. This Homo sapiens (Human) protein is Short-chain specific acyl-CoA dehydrogenase, mitochondrial (ACADS).